Here is an 87-residue protein sequence, read N- to C-terminus: Histone H1.C6/H1.C9 (87 aa).

Positions 1–87 are disordered; the sequence is MSDAAVPPKK…KKAVKKAPKK (87 aa). Residues 11 to 87 show a composition bias toward basic residues; that stretch reads ASPKKASPKK…KKAVKKAPKK (77 aa).

The protein localises to the nucleus. It is found in the chromosome. The protein is Histone H1.C6/H1.C9 of Trypanosoma cruzi.